A 142-amino-acid polypeptide reads, in one-letter code: Galactose-binding lectin l-1 (142 aa).

In terms of domain architecture, Galectin spans 3 to 134 (FVEVKNLIMK…DATVKNISVN (132 aa)). Residue 68-74 (WQEEQRD) participates in a beta-D-galactoside binding. The N-linked (GlcNAc...) asparagine glycan is linked to N130.

Homodimer. Post-translationally, the N-terminus is blocked. Skin; highest expression in that of individuals showing resistance to infectious disease.

It is found in the secreted. In terms of biological role, involved in host defense at the body surface. Causes agglutination of the Gram-positive bacterium S.difficile. Possesses calcium-independent hemagglutinating activity. This Anguilla japonica (Japanese eel) protein is Galactose-binding lectin l-1.